Here is a 257-residue protein sequence, read N- to C-terminus: Imidazole glycerol phosphate synthase subunit HisF (257 aa).

Residues D12 and D131 contribute to the active site.

Belongs to the HisA/HisF family. In terms of assembly, heterodimer of HisH and HisF.

The protein resides in the cytoplasm. The enzyme catalyses 5-[(5-phospho-1-deoxy-D-ribulos-1-ylimino)methylamino]-1-(5-phospho-beta-D-ribosyl)imidazole-4-carboxamide + L-glutamine = D-erythro-1-(imidazol-4-yl)glycerol 3-phosphate + 5-amino-1-(5-phospho-beta-D-ribosyl)imidazole-4-carboxamide + L-glutamate + H(+). The protein operates within amino-acid biosynthesis; L-histidine biosynthesis; L-histidine from 5-phospho-alpha-D-ribose 1-diphosphate: step 5/9. In terms of biological role, IGPS catalyzes the conversion of PRFAR and glutamine to IGP, AICAR and glutamate. The HisF subunit catalyzes the cyclization activity that produces IGP and AICAR from PRFAR using the ammonia provided by the HisH subunit. This Paraburkholderia phymatum (strain DSM 17167 / CIP 108236 / LMG 21445 / STM815) (Burkholderia phymatum) protein is Imidazole glycerol phosphate synthase subunit HisF.